The primary structure comprises 221 residues: MAKNKFNHSWLHDHINDPYVKMAQREGYRARAAYKLKEIDEQDKLIRPGQVIVDLGAAPGSWSQYARNKLADSPRAKDGRIDGAVVAIDLLPMEPVADVTFIQGDFREESVFRELESVVLDASGGNKIDLVLSDMAPNLSGVAFADAARIEYLCDLALEFAQAHLKPEGALLVKCFHGSGYSQIVEKFKRHFKVVAKRKPKASRDKSSETFILGRYLKAVD.

S-adenosyl-L-methionine is bound by residues Gly-60, Trp-62, Asp-89, Asp-105, and Asp-134. The active-site Proton acceptor is the Lys-174.

Belongs to the class I-like SAM-binding methyltransferase superfamily. RNA methyltransferase RlmE family.

It is found in the cytoplasm. The catalysed reaction is uridine(2552) in 23S rRNA + S-adenosyl-L-methionine = 2'-O-methyluridine(2552) in 23S rRNA + S-adenosyl-L-homocysteine + H(+). Its function is as follows. Specifically methylates the uridine in position 2552 of 23S rRNA at the 2'-O position of the ribose in the fully assembled 50S ribosomal subunit. The chain is Ribosomal RNA large subunit methyltransferase E from Cupriavidus necator (strain ATCC 17699 / DSM 428 / KCTC 22496 / NCIMB 10442 / H16 / Stanier 337) (Ralstonia eutropha).